The primary structure comprises 295 residues: Fructose-bisphosphate aldolase class 1 (295 aa).

The Proton acceptor role is filled by glutamate 176. Lysine 213 functions as the Schiff-base intermediate with dihydroxyacetone-P in the catalytic mechanism.

This sequence belongs to the class I fructose-bisphosphate aldolase family.

It carries out the reaction beta-D-fructose 1,6-bisphosphate = D-glyceraldehyde 3-phosphate + dihydroxyacetone phosphate. Its pathway is carbohydrate degradation; glycolysis; D-glyceraldehyde 3-phosphate and glycerone phosphate from D-glucose: step 4/4. The chain is Fructose-bisphosphate aldolase class 1 from Treponema denticola (strain ATCC 35405 / DSM 14222 / CIP 103919 / JCM 8153 / KCTC 15104).